Reading from the N-terminus, the 420-residue chain is LanC-like protein 3 homolog (420 aa).

It belongs to the LanC-like protein family.

The protein is LanC-like protein 3 homolog of Drosophila pseudoobscura pseudoobscura (Fruit fly).